Reading from the N-terminus, the 129-residue chain is uncharacterized protein (129 aa).

It localises to the cytoplasm. The protein localises to the cytosol. The protein resides in the nucleus. This is an uncharacterized protein from Schizosaccharomyces pombe (strain 972 / ATCC 24843) (Fission yeast).